A 263-amino-acid polypeptide reads, in one-letter code: UPF0739 protein C1orf74 homolog (263 aa).

Belongs to the UPF0739 family.

In Rattus norvegicus (Rat), this protein is UPF0739 protein C1orf74 homolog.